We begin with the raw amino-acid sequence, 275 residues long: Formamidopyrimidine-DNA glycosylase (275 aa).

Residue proline 2 is the Schiff-base intermediate with DNA of the active site. Glutamate 3 acts as the Proton donor in catalysis. Lysine 58 acts as the Proton donor; for beta-elimination activity in catalysis. Residues histidine 93, arginine 111, and arginine 156 each coordinate DNA. An FPG-type zinc finger spans residues 241–275 (FAYDRAGLPCRVCGTPIRQIVQGQRSTYFCPTCQR). Arginine 265 functions as the Proton donor; for delta-elimination activity in the catalytic mechanism.

The protein belongs to the FPG family. In terms of assembly, monomer. Zn(2+) is required as a cofactor.

It catalyses the reaction Hydrolysis of DNA containing ring-opened 7-methylguanine residues, releasing 2,6-diamino-4-hydroxy-5-(N-methyl)formamidopyrimidine.. The catalysed reaction is 2'-deoxyribonucleotide-(2'-deoxyribose 5'-phosphate)-2'-deoxyribonucleotide-DNA = a 3'-end 2'-deoxyribonucleotide-(2,3-dehydro-2,3-deoxyribose 5'-phosphate)-DNA + a 5'-end 5'-phospho-2'-deoxyribonucleoside-DNA + H(+). In terms of biological role, involved in base excision repair of DNA damaged by oxidation or by mutagenic agents. Acts as a DNA glycosylase that recognizes and removes damaged bases. Has a preference for oxidized purines, such as 7,8-dihydro-8-oxoguanine (8-oxoG). Has AP (apurinic/apyrimidinic) lyase activity and introduces nicks in the DNA strand. Cleaves the DNA backbone by beta-delta elimination to generate a single-strand break at the site of the removed base with both 3'- and 5'-phosphates. This Burkholderia vietnamiensis (strain G4 / LMG 22486) (Burkholderia cepacia (strain R1808)) protein is Formamidopyrimidine-DNA glycosylase.